The following is a 438-amino-acid chain: RING finger protein 150 (438 aa).

Positions 1–34 (MAMSLIQACCSLALSTWLLSFCFVHLLCLDFTVA) are cleaved as a signal peptide. The Extracellular segment spans residues 35–208 (EKEEWYTAFV…NLQKYVSRTS (174 aa)). N-linked (GlcNAc...) asparagine glycans are attached at residues Asn45, Asn125, Asn153, and Asn186. Residues 81 to 183 (SPKQDARGEV…PKGKEIVSLL (103 aa)) enclose the PA domain. A helical transmembrane segment spans residues 209 to 229 (VVFVSISFIVLMIISLAWLVF). Topologically, residues 230–438 (YYIQRFRYAN…TDQDCEEVKS (209 aa)) are cytoplasmic. The RING-type; atypical zinc finger occupies 278-319 (CAVCIEGYKPNDVVRILPCRHLFHKSCVDPWLLDHRTCPMCK).

The protein localises to the membrane. The sequence is that of RING finger protein 150 (RNF150) from Homo sapiens (Human).